Consider the following 180-residue polypeptide: MAEDDLCSLFFKLKVEDVTSSDELARHMKNASNERKPLIEPGENQSMDIDEEGGSVGHGLLYLYVDCPTMMLCFYGGSLPYNWMQGALLTNLPPYQHDVTLDEVNRGLRQASGFFGYADPMRSAYFAAFSFPGRVIKLNEQMELTSTKGKCLTFDPYASTQLRFEPGELVRHGECKFAIG.

Its function is as follows. Hydrolyzes cytokinin glucosides thus liberating free cytokinins. The chain is Cytokinin-beta-glucosidase 2 (ROLC2) from Panax ginseng (Korean ginseng).